Reading from the N-terminus, the 96-residue chain is Co-chaperonin GroES (96 aa).

Belongs to the GroES chaperonin family. In terms of assembly, heptamer of 7 subunits arranged in a ring. Interacts with the chaperonin GroEL.

Its subcellular location is the cytoplasm. Functionally, together with the chaperonin GroEL, plays an essential role in assisting protein folding. The GroEL-GroES system forms a nano-cage that allows encapsulation of the non-native substrate proteins and provides a physical environment optimized to promote and accelerate protein folding. GroES binds to the apical surface of the GroEL ring, thereby capping the opening of the GroEL channel. This is Co-chaperonin GroES from Thiobacillus denitrificans (strain ATCC 25259 / T1).